The sequence spans 288 residues: ATP phosphoribosyltransferase (288 aa).

The protein belongs to the ATP phosphoribosyltransferase family. Long subfamily. It depends on Mg(2+) as a cofactor.

The protein resides in the cytoplasm. It catalyses the reaction 1-(5-phospho-beta-D-ribosyl)-ATP + diphosphate = 5-phospho-alpha-D-ribose 1-diphosphate + ATP. It participates in amino-acid biosynthesis; L-histidine biosynthesis; L-histidine from 5-phospho-alpha-D-ribose 1-diphosphate: step 1/9. Feedback inhibited by histidine. Catalyzes the condensation of ATP and 5-phosphoribose 1-diphosphate to form N'-(5'-phosphoribosyl)-ATP (PR-ATP). Has a crucial role in the pathway because the rate of histidine biosynthesis seems to be controlled primarily by regulation of HisG enzymatic activity. The polypeptide is ATP phosphoribosyltransferase (Methanococcus maripaludis (strain C7 / ATCC BAA-1331)).